A 141-amino-acid chain; its full sequence is VLSAADKTNVKAAWDKIGGHGGEYGAEALERMFLSFPTTKTYFPHFDVSHGSAQVKAHGKKVADALANAASHLDDLPNALSALSDLHAHKLRVDPVNFKLLSHCLLVTLACHHPAEFTPAVHASLDKFLATVATVLTSKYR.

The region spanning 1–141 (VLSAADKTNV…VATVLTSKYR (141 aa)) is the Globin domain. Position 3 is a phosphoserine (serine 3). Lysine 7 is subject to N6-succinyllysine. Threonine 8 is subject to Phosphothreonine. The residue at position 11 (lysine 11) is an N6-succinyllysine. Lysine 16 is subject to N6-acetyllysine; alternate. Position 16 is an N6-succinyllysine; alternate (lysine 16). Position 24 is a phosphotyrosine (tyrosine 24). Residue serine 35 is modified to Phosphoserine. Lysine 40 carries the post-translational modification N6-succinyllysine. Serine 49 is subject to Phosphoserine. An O2-binding site is contributed by histidine 58. Histidine 87 contributes to the heme b binding site. Serine 102 is subject to Phosphoserine. Position 108 is a phosphothreonine (threonine 108). Serine 124 is subject to Phosphoserine. Phosphothreonine occurs at positions 134 and 137. At serine 138 the chain carries Phosphoserine.

Belongs to the globin family. In terms of assembly, heterotetramer of two alpha chains and two beta chains. As to expression, red blood cells.

In terms of biological role, involved in oxygen transport from the lung to the various peripheral tissues. Functionally, hemopressin acts as an antagonist peptide of the cannabinoid receptor CNR1. Hemopressin-binding efficiently blocks cannabinoid receptor CNR1 and subsequent signaling. This Ctenodactylus gundi (Northern gundi) protein is Hemoglobin subunit alpha (HBA).